Here is a 457-residue protein sequence, read N- to C-terminus: Squalene epoxidase erg1 (457 aa).

FAD is bound by residues 15–16 (IT), 35–36 (ER), R43, R114, V130, D293, and M306. Transmembrane regions (helical) follow at residues 347 to 364 (GYSF…KLFT), 409 to 429 (FYAV…ALLM), and 433 to 453 (IIES…YILS).

Belongs to the squalene monooxygenase family. FAD serves as cofactor.

The protein resides in the microsome membrane. It localises to the endoplasmic reticulum membrane. Its subcellular location is the vacuole membrane. The enzyme catalyses squalene + reduced [NADPH--hemoprotein reductase] + O2 = (S)-2,3-epoxysqualene + oxidized [NADPH--hemoprotein reductase] + H2O + H(+). The protein operates within terpene metabolism; lanosterol biosynthesis; lanosterol from farnesyl diphosphate: step 2/3. It participates in steroid metabolism; ergosterol biosynthesis. Activity is blocked by the allylamine class antifungal terbinafine. In terms of biological role, squalene epoxidase; part of the third module of ergosterol biosynthesis pathway that includes by the late steps of the pathway. Erg1 catalyzes the epoxidation of squalene into 2,3-epoxysqualene. The third module or late pathway involves the ergosterol synthesis itself through consecutive reactions that mainly occur in the endoplasmic reticulum (ER) membrane. Firstly, the squalene synthase erg9 catalyzes the condensation of 2 farnesyl pyrophosphate moieties to form squalene, which is the precursor of all steroids. Secondly, squalene is converted into lanosterol by the consecutive action of the squalene epoxidase erg1 and the lanosterol synthase erg7. The lanosterol 14-alpha-demethylase erg11/cyp1 catalyzes C14-demethylation of lanosterol to produce 4,4'-dimethyl cholesta-8,14,24-triene-3-beta-ol. In the next steps, a complex process involving various demethylation, reduction and desaturation reactions catalyzed by the C-14 reductase erg24 and the C-4 demethylation complex erg25-erg26-erg27 leads to the production of zymosterol. Erg28 likely functions in the C-4 demethylation complex reaction by tethering erg26 and Erg27 to the endoplasmic reticulum or to facilitate interaction between these proteins. Then, the sterol 24-C-methyltransferase erg6 catalyzes the methyl transfer from S-adenosyl-methionine to the C-24 of zymosterol to form fecosterol. The C-8 sterol isomerase erg2 catalyzes the reaction which results in unsaturation at C-7 in the B ring of sterols and thus converts fecosterol to episterol. The sterol-C5-desaturases erg31 and erg32 then catalyze the introduction of a C-5 double bond in the B ring to produce 5-dehydroepisterol. The C-22 sterol desaturase erg5 further converts 5-dehydroepisterol into ergosta-5,7,22,24(28)-tetraen-3beta-ol by forming the C-22(23) double bond in the sterol side chain. Finally, ergosta-5,7,22,24(28)-tetraen-3beta-ol is substrate of the C-24(28) sterol reductase erg4 to produce ergosterol. In the genus Schizosaccharomyces, a second route exists between lanosterol and fecosterol, via the methylation of lanosterol to eburicol by erg6, followed by C14-demethylation by erg11/cyp1 and C4-demethylation by the demethylation complex erg25-erg26-erg27. In Schizosaccharomyces pombe (strain 972 / ATCC 24843) (Fission yeast), this protein is Squalene epoxidase erg1.